The chain runs to 80 residues: MYKKYTIGTVISNKMNKTITVAVKNKAQHLRYKKIITKTNKYYAHDEHNQCYIGDIVKIRPYRPLSKKKRWILIERIIEK.

It belongs to the universal ribosomal protein uS17 family. In terms of assembly, part of the 30S ribosomal subunit.

The protein resides in the plastid. It localises to the chloroplast. One of the primary rRNA binding proteins, it binds specifically to the 5'-end of 16S ribosomal RNA. The chain is Small ribosomal subunit protein uS17c (rps17) from Gracilaria tenuistipitata var. liui (Red alga).